The chain runs to 147 residues: MNPAHLLVLSAVCVSLLGAANIPPHPLNLKNFMEMIRYTIPCEKTWGEYADYGCYCGAGGSGRPIDALDRCCYVHDNCYGDAETKHKCNPKTQSYSYKLTKRTIICYGAAGTCGRIVCDCDRTAALCFGDSEYIERHKNIDTKRHCQ.

The first 19 residues, 1–19 (MNPAHLLVLSAVCVSLLGA), serve as a signal peptide directing secretion. Positions 20–27 (ANIPPHPL) are excised as a propeptide. Intrachain disulfides connect Cys-54-Cys-146, Cys-56-Cys-72, Cys-71-Cys-127, Cys-78-Cys-120, Cys-88-Cys-113, and Cys-106-Cys-118. Residues Tyr-55, Gly-57, and Gly-59 each contribute to the Ca(2+) site. His-75 is a catalytic residue. Asp-76 contacts Ca(2+). Asp-121 is an active-site residue.

This sequence belongs to the phospholipase A2 family. Group I subfamily. D49 sub-subfamily. Heterodimer; disulfide-linked. The A chain has phospholipase A2 activity and the B chain shows homology with the basic protease inhibitors. Ca(2+) is required as a cofactor. Expressed by the venom gland.

The protein localises to the secreted. It catalyses the reaction a 1,2-diacyl-sn-glycero-3-phosphocholine + H2O = a 1-acyl-sn-glycero-3-phosphocholine + a fatty acid + H(+). Snake venom phospholipase A2 (PLA2) that shows presynaptic neurotoxicity. The A chain has phospholipase activity. PLA2 catalyzes the calcium-dependent hydrolysis of the 2-acyl groups in 3-sn-phosphoglycerides. This Bungarus candidus (Malayan krait) protein is Basic phospholipase A2 beta-bungarotoxin A4 chain.